We begin with the raw amino-acid sequence, 449 residues long: Procollagen C-endopeptidase enhancer 1 (449 aa).

Residues 1-25 (MLPAATASLLGPLLTACALLPFAQG) form the signal peptide. The N-linked (GlcNAc...) asparagine glycan is linked to Asn29. Cystine bridges form between Cys37–Cys63, Cys90–Cys112, Cys159–Cys186, Cys213–Cys236, Cys318–Cys386, Cys322–Cys389, and Cys333–Cys437. CUB domains follow at residues 37–149 (CGGD…YSGR) and 159–273 (CGGR…YKTL). Ser50 carries the phosphoserine modification. The segment at 271–321 (KTLPRGTAKEGQGPGPKRGTEPKVKLPPKSQPPEKTEESPSAPDAPTCPKQ) is disordered. The NTR domain occupies 318–437 (CPKQCRRTGT…ILTNLSKRKC (120 aa)). Asn431 carries an N-linked (GlcNAc...) asparagine glycan.

Interacts with EFEMP2. In terms of processing, C-terminally processed at multiple positions.

It is found in the secreted. Binds to the C-terminal propeptide of type I procollagen and enhances procollagen C-proteinase activity. Functionally, C-terminal processed part of PCPE (CT-PCPE) may have an metalloproteinase inhibitory activity. This is Procollagen C-endopeptidase enhancer 1 (PCOLCE) from Homo sapiens (Human).